The following is a 115-amino-acid chain: Large ribosomal subunit protein bL20 (115 aa).

The protein belongs to the bacterial ribosomal protein bL20 family.

In terms of biological role, binds directly to 23S ribosomal RNA and is necessary for the in vitro assembly process of the 50S ribosomal subunit. It is not involved in the protein synthesizing functions of that subunit. This chain is Large ribosomal subunit protein bL20, found in Prochlorococcus marinus subsp. pastoris (strain CCMP1986 / NIES-2087 / MED4).